A 423-amino-acid chain; its full sequence is MLDTLLINIGQLLTMDQEDGLLRREAMNTLPVIENGVVGIENDVITFVGTAEEAKGLQAKEVIDCGGKMVSPGLVDPHTHLVFGGSRENEIALKLQGVPYLEILEQGGGILSTVNATKQASKEELVQKAKFHLDRMLSFGVTTVEAKSGYGLDDETEWKQLEATAQLQKEHPIDLVSTFLGAHAVPKEYKGRSKEFLQWMLDLLPEMKEKQLAEFVDIFCETGVFSVEESKEFLLKAKELGFDVKIHADEIDPLGGAEAAAEIGAASADHLVGASDKGIEMLANSNTVATLLPGTTFYLNKESFARGRKMIDEGVAVALATDFNPGSCPTENIQLIMSIAMLKLKMTPEEVWNAVTVNSSYAINRGDVAGKIRVGRKADLVLWDAYNYAYVPYHYGVSHVNTVWKNGNIAYTRGEQSWSTATI.

Residues histidine 78 and histidine 80 each contribute to the Fe(3+) site. Zn(2+)-binding residues include histidine 78 and histidine 80. 3 residues coordinate 4-imidazolone-5-propanoate: arginine 87, tyrosine 150, and histidine 183. An N-formimidoyl-L-glutamate-binding site is contributed by tyrosine 150. Histidine 247 contacts Fe(3+). Zn(2+) is bound at residue histidine 247. Glutamate 250 contacts 4-imidazolone-5-propanoate. Aspartate 322 contributes to the Fe(3+) binding site. Aspartate 322 contacts Zn(2+). N-formimidoyl-L-glutamate-binding residues include asparagine 324 and glycine 326. Serine 327 contributes to the 4-imidazolone-5-propanoate binding site.

It belongs to the metallo-dependent hydrolases superfamily. HutI family. Requires Zn(2+) as cofactor. Fe(3+) serves as cofactor.

It is found in the cytoplasm. The catalysed reaction is 4-imidazolone-5-propanoate + H2O = N-formimidoyl-L-glutamate. The protein operates within amino-acid degradation; L-histidine degradation into L-glutamate; N-formimidoyl-L-glutamate from L-histidine: step 3/3. In terms of biological role, catalyzes the hydrolytic cleavage of the carbon-nitrogen bond in imidazolone-5-propanoate to yield N-formimidoyl-L-glutamate. It is the third step in the universal histidine degradation pathway. In Bacillus cereus (strain G9842), this protein is Imidazolonepropionase.